A 112-amino-acid polypeptide reads, in one-letter code: MTNSDDDLFSEKSTSSDTQQVQNILELEAKIPDILSSAGKCIEAIQLNNSLEDFRKYSKEFLETVEFISTGLRRQALELEKAEVPVVSLQPKKRYASTPLSNLIFDQSSKLM.

The protein belongs to the Mediator complex subunit 11 family. Component of the Mediator complex, which is composed of at least 21 subunits that form three structurally distinct submodules. The Mediator head module, the middle module, and the tail module. The head and the middle modules interact directly with RNA polymerase II, whereas the elongated tail module interacts with gene-specific regulatory proteins. Med11 is part of the head module. Forms a heterodimer with med22. The med11/22 heterodimer binds to and stabilizes the central head subunit med17.

The protein resides in the cytoplasm. The protein localises to the nucleus. Its function is as follows. Component of the Mediator complex, a coactivator involved in the regulated transcription of nearly all RNA polymerase II-dependent genes. Mediator functions as a bridge to convey information from gene-specific regulatory proteins to the basal RNA polymerase II transcription machinery. Mediator is recruited to promoters by direct interactions with regulatory proteins and serves as a scaffold for the assembly of a functional pre-initiation complex (PIC) with RNA polymerase II and the general transcription factors. The essential med11/22 heterodimer specifically functions in promoting stable PIC formation. This is Mediator of RNA polymerase II transcription subunit 11 (med11) from Schizosaccharomyces pombe (strain 972 / ATCC 24843) (Fission yeast).